The chain runs to 226 residues: Biosynthetic peptidoglycan transglycosylase (226 aa).

The chain crosses the membrane as a helical span at residues 5 to 25; sequence IGVTVLAVVGLLLLPYLLTPL.

It belongs to the glycosyltransferase 51 family.

Its subcellular location is the cell inner membrane. The catalysed reaction is [GlcNAc-(1-&gt;4)-Mur2Ac(oyl-L-Ala-gamma-D-Glu-L-Lys-D-Ala-D-Ala)](n)-di-trans,octa-cis-undecaprenyl diphosphate + beta-D-GlcNAc-(1-&gt;4)-Mur2Ac(oyl-L-Ala-gamma-D-Glu-L-Lys-D-Ala-D-Ala)-di-trans,octa-cis-undecaprenyl diphosphate = [GlcNAc-(1-&gt;4)-Mur2Ac(oyl-L-Ala-gamma-D-Glu-L-Lys-D-Ala-D-Ala)](n+1)-di-trans,octa-cis-undecaprenyl diphosphate + di-trans,octa-cis-undecaprenyl diphosphate + H(+). It functions in the pathway cell wall biogenesis; peptidoglycan biosynthesis. Functionally, peptidoglycan polymerase that catalyzes glycan chain elongation from lipid-linked precursors. This chain is Biosynthetic peptidoglycan transglycosylase, found in Nitrobacter hamburgensis (strain DSM 10229 / NCIMB 13809 / X14).